The primary structure comprises 562 residues: Potassium-transporting ATPase potassium-binding subunit (562 aa).

The next 12 membrane-spanning stretches (helical) occupy residues 6–26, 62–82, 132–152, 175–195, 253–273, 283–303, 327–347, 356–376, 379–399, 416–436, 483–503, and 526–546; these read FLLI…LGGF, YALA…VLLM, GLTV…FALI, LYVL…QGVL, FVQM…FGQV, LIWA…YAEL, FGIL…CGAV, ALGG…FGGV, GLYG…LMIG, MTAL…ALAL, LLLA…VLAI, and LFIG…FIPA.

The protein belongs to the KdpA family. In terms of assembly, the system is composed of three essential subunits: KdpA, KdpB and KdpC.

It localises to the cell inner membrane. Its function is as follows. Part of the high-affinity ATP-driven potassium transport (or Kdp) system, which catalyzes the hydrolysis of ATP coupled with the electrogenic transport of potassium into the cytoplasm. This subunit binds the periplasmic potassium ions and delivers the ions to the membrane domain of KdpB through an intramembrane tunnel. The sequence is that of Potassium-transporting ATPase potassium-binding subunit from Yersinia pseudotuberculosis serotype IB (strain PB1/+).